The chain runs to 734 residues: Ribosomal RNA large subunit methyltransferase K/L (734 aa).

One can recognise a THUMP domain in the interval 49 to 167; sequence QAYRVCMWSR…KTEHTYCLDL (119 aa).

The protein belongs to the methyltransferase superfamily. RlmKL family.

The protein localises to the cytoplasm. The enzyme catalyses guanosine(2445) in 23S rRNA + S-adenosyl-L-methionine = N(2)-methylguanosine(2445) in 23S rRNA + S-adenosyl-L-homocysteine + H(+). It carries out the reaction guanosine(2069) in 23S rRNA + S-adenosyl-L-methionine = N(2)-methylguanosine(2069) in 23S rRNA + S-adenosyl-L-homocysteine + H(+). Its function is as follows. Specifically methylates the guanine in position 2445 (m2G2445) and the guanine in position 2069 (m7G2069) of 23S rRNA. In Acinetobacter baylyi (strain ATCC 33305 / BD413 / ADP1), this protein is Ribosomal RNA large subunit methyltransferase K/L.